Reading from the N-terminus, the 640-residue chain is Threonine--tRNA ligase (640 aa).

In terms of domain architecture, TGS spans 1-61 (MPTITLPDGS…ENDASLQIIT (61 aa)). The tract at residues 242–533 (DHRKIGKRLG…LIEHYEGAFP (292 aa)) is catalytic. The Zn(2+) site is built by Cys-333, His-384, and His-510.

This sequence belongs to the class-II aminoacyl-tRNA synthetase family. As to quaternary structure, homodimer. It depends on Zn(2+) as a cofactor.

The protein resides in the cytoplasm. It carries out the reaction tRNA(Thr) + L-threonine + ATP = L-threonyl-tRNA(Thr) + AMP + diphosphate + H(+). Functionally, catalyzes the attachment of threonine to tRNA(Thr) in a two-step reaction: L-threonine is first activated by ATP to form Thr-AMP and then transferred to the acceptor end of tRNA(Thr). Also edits incorrectly charged L-seryl-tRNA(Thr). This Pseudomonas savastanoi pv. phaseolicola (strain 1448A / Race 6) (Pseudomonas syringae pv. phaseolicola (strain 1448A / Race 6)) protein is Threonine--tRNA ligase.